A 693-amino-acid chain; its full sequence is MA3 DOMAIN-CONTAINING TRANSLATION REGULATORY FACTOR 2 (693 aa).

Residues Ser-25–Asp-60 are disordered. Positions Glu-90–Lys-211 constitute an MI 1 domain. The Nuclear localization signal 1 signature appears at Glu-241–Asp-248. MI domains lie at Asp-254–Ala-375, Val-389–Asn-510, and Glu-560–Gln-681. The Nuclear localization signal 2 signature appears at Val-430–Ala-437. The segment at Glu-673–Gly-693 is disordered. Positions Lys-683–Gly-693 are enriched in low complexity.

Belongs to the PDCD4 family. Binds to EIF4A1. The association with ribosomes is modulated by cellular energy status and TOR activity. Mostly expressed in reproductive tissues, such as flower buds and flowers, and, to a lower extent, in vegetative tissues, such as leaves, roots and stems.

The protein localises to the nucleus. The protein resides in the cytoplasm. It localises to the cytosol. Functionally, involved in target of rapamycin (TOR)-regulated translation control, especially under energy-deficient conditions. The polypeptide is MA3 DOMAIN-CONTAINING TRANSLATION REGULATORY FACTOR 2 (Arabidopsis thaliana (Mouse-ear cress)).